The sequence spans 364 residues: Chorismate synthase (364 aa).

NADP(+)-binding residues include arginine 48 and arginine 54. Residues 125-127, 238-239, glycine 278, 293-297, and arginine 319 each bind FMN; these read RSS, NA, and KPTSS.

It belongs to the chorismate synthase family. As to quaternary structure, homotetramer. FMNH2 is required as a cofactor.

It catalyses the reaction 5-O-(1-carboxyvinyl)-3-phosphoshikimate = chorismate + phosphate. It functions in the pathway metabolic intermediate biosynthesis; chorismate biosynthesis; chorismate from D-erythrose 4-phosphate and phosphoenolpyruvate: step 7/7. Catalyzes the anti-1,4-elimination of the C-3 phosphate and the C-6 proR hydrogen from 5-enolpyruvylshikimate-3-phosphate (EPSP) to yield chorismate, which is the branch point compound that serves as the starting substrate for the three terminal pathways of aromatic amino acid biosynthesis. This reaction introduces a second double bond into the aromatic ring system. In Shewanella loihica (strain ATCC BAA-1088 / PV-4), this protein is Chorismate synthase.